A 134-amino-acid polypeptide reads, in one-letter code: Profilin-2 (134 aa).

Cysteines 13 and 118 form a disulfide. An Involved in PIP2 interaction motif is present at residues 84 to 100 (AVIRGKKGSGGITIKKT). Threonine 114 is modified (phosphothreonine).

Belongs to the profilin family. As to quaternary structure, occurs in many kinds of cells as a complex with monomeric actin in a 1:1 ratio. Post-translationally, phosphorylated by MAP kinases.

The protein localises to the cytoplasm. It is found in the cytoskeleton. In terms of biological role, binds to actin and affects the structure of the cytoskeleton. At high concentrations, profilin prevents the polymerization of actin, whereas it enhances it at low concentrations. The polypeptide is Profilin-2 (Olea europaea (Common olive)).